The chain runs to 561 residues: MRLWKSMAWGILLWHSQSGALCPAWPPARAAEEITRLQQQLADWNDIYWKQGVSAVDDSVYDQLSARLVQWQRCVGQDVSSTPVSPPLNGTTMHPVAHTGVRKLADRQAVEQWMRGRSELWVQPKVDGVAVTLVYQNGKLTRAISRGNGLQGEDWTPKIRLIPSIPQTTQGALANAVLQGEIFLQREGHIQQRMGGMNARSKAAGMLMRQDNASALNSLGIFIWAWPDGPANMPERLSQLAKAGFSLTKKYSLAVKDASEVERARQSWLTSALPFVTDGVVIRMAKEPASQYWRPGQGDWLAAWKYPPVAQVAQVSAIQFSVGKSGKITVVASLVPVILDDKRVQRVNIGSVKRWEAWDIAPGDQILVSLAGQGIPRLDEVVWRSRERSKPVPPDSHFNSLTCFYASETCQEQFISRLVWLGSRSALGLDGMGEASWRALHQTHRFEHIFSWLALTSAQIANTPGFAKGKSEQIWRQFNLARRQPFTRWIMAMDIPLTQAALQASGDRSWEQLLMRTEQHWRQLPATGERRAGRVIDWRDNPQIKTLSRWLAAQHIPGFGS.

Lys-125 (N6-AMP-lysine intermediate) is an active-site residue.

The protein belongs to the NAD-dependent DNA ligase family. LigB subfamily.

The enzyme catalyses NAD(+) + (deoxyribonucleotide)n-3'-hydroxyl + 5'-phospho-(deoxyribonucleotide)m = (deoxyribonucleotide)n+m + AMP + beta-nicotinamide D-nucleotide.. In terms of biological role, catalyzes the formation of phosphodiester linkages between 5'-phosphoryl and 3'-hydroxyl groups in double-stranded DNA using NAD as a coenzyme and as the energy source for the reaction. The sequence is that of DNA ligase B from Salmonella dublin (strain CT_02021853).